Consider the following 448-residue polypeptide: 4-hydroxybenzoate transporter PcaK (448 aa).

Topologically, residues 1 to 30 (MNSPSLPAVERLDVQAFINAQPLSPYQWRI) are cytoplasmic. A helical membrane pass occupies residues 31 to 51 (VLLCFLIVFLDGLDTAAMGFI). The Periplasmic segment spans residues 52 to 67 (APALTQDWGIDRASLG). Residues 68-88 (PVMSAALIGMVFGALGSGPLA) traverse the membrane as a helical segment. Topologically, residues 89–94 (DRYGRK) are cytoplasmic. The chain crosses the membrane as a helical span at residues 95–115 (LVLVAAVFLFGLFSLASAYST). The Periplasmic segment spans residues 116-119 (NVEQ). A helical transmembrane segment spans residues 120–140 (LLALRFLTGLGLGAAMPNATT). Residues 141–152 (LLSEYTPERLKS) are Cytoplasmic-facing. Residues 153-173 (LLVTSMFCGFNLGMACGGFVS) traverse the membrane as a helical segment. At 174 to 184 (AKLIPLFGWHS) the chain is on the periplasmic side. The chain crosses the membrane as a helical span at residues 185–205 (LLLLGGLLPLVLAVVLLFRLP). Residues 206 to 261 (ESARYLVVRNRGSERVRQVLAPIAPAQVALARSFHVPEQQTVQARNVFAVIFSGTY) lie on the Cytoplasmic side of the membrane. The helical transmembrane segment at 262 to 282 (SAGTLLLWLTYFMGLVIVYLL) threads the bilayer. Over 283–301 (TSWLPTLMRDSGASLEQAA) the chain is Periplasmic. A helical transmembrane segment spans residues 302 to 322 (FIGALFQFGGVLSAVAVGWAM). Over 323-329 (DRFNPHK) the chain is Cytoplasmic. The helical transmembrane segment at 330–350 (VIGLFYLLAGVFAWCVGQSLG) threads the bilayer. Gln-351 is a topological domain (periplasmic). The helical transmembrane segment at 352–372 (VTLLATLVLLAGMCINGAQSA) threads the bilayer. The Cytoplasmic portion of the chain corresponds to 373–398 (MPSLAARFYPTQGRATGVSWMLGIGR). The helical transmembrane segment at 399 to 419 (FGAILGAWIGATLLGLGWNFE) threads the bilayer. Residues 420–421 (QV) are Periplasmic-facing. The chain crosses the membrane as a helical span at residues 422 to 442 (LTALVLPAALATAAVLLKGLV). At 443–448 (SHADAG) the chain is on the cytoplasmic side.

Belongs to the major facilitator superfamily. Aromatic acid:H(+) symporter (AAHS) (TC 2.A.1.15) family.

It localises to the cell inner membrane. Transports 4-hydroxybenzoate (4-HBA) and protocatechuate across the membrane. Driven by the proton motive force. Also functions as a chemoreceptor, which is required for chemotaxis to aromatic acids. The polypeptide is 4-hydroxybenzoate transporter PcaK (pcaK) (Pseudomonas aeruginosa (strain ATCC 15692 / DSM 22644 / CIP 104116 / JCM 14847 / LMG 12228 / 1C / PRS 101 / PAO1)).